A 158-amino-acid polypeptide reads, in one-letter code: MTDALTRIYVDADACPVKDEVYKVAERHHLPVTLVAGGFIRVPQHPLIERVAAGSGMDAADDWIAERIKPGDIVITADIPLASRCVKAGATAIAPNGKPFTEESIGMTLAVRNLMTDLRSTGEITGGPRAFSPRDRSTFLSALDSAIRRIARRRAAPT.

This sequence belongs to the UPF0178 family.

This is UPF0178 protein Rpal_2485 from Rhodopseudomonas palustris (strain TIE-1).